The chain runs to 239 residues: MSTPHINAPLDAFADTILMPGDPLRAKLIAETYLENVVQVTDVRGMLGFTGEFKGRKISVMGHGMGAPSASIYFHELMTTYKVKNFIRIGSCGAIHDDVKLKDLIVAIGASTDSKMNRIRFKDNDFAATANYNMLSECVNTLKTTDINYLVGNVFSSDLFYRPDEEQYDMMARYGILGVEMEVNALYSAAAENHCNAVALCTVTDHIKNHEHLTADERRTELHEMINVALDVALKLPTE.

An a purine D-ribonucleoside-binding site is contributed by His5. Residues Gly21, Arg25, Arg44, and 88 to 91 (RIGS) contribute to the phosphate site. A purine D-ribonucleoside contacts are provided by residues 180–182 (EME) and 204–205 (TD). The active-site Proton donor is the Asp205.

The protein belongs to the PNP/UDP phosphorylase family. As to quaternary structure, homohexamer; trimer of homodimers.

The catalysed reaction is a purine D-ribonucleoside + phosphate = a purine nucleobase + alpha-D-ribose 1-phosphate. It catalyses the reaction a purine 2'-deoxy-D-ribonucleoside + phosphate = a purine nucleobase + 2-deoxy-alpha-D-ribose 1-phosphate. In terms of biological role, catalyzes the reversible phosphorolytic breakdown of the N-glycosidic bond in the beta-(deoxy)ribonucleoside molecules, with the formation of the corresponding free purine bases and pentose-1-phosphate. In Aliivibrio fischeri (strain ATCC 700601 / ES114) (Vibrio fischeri), this protein is Purine nucleoside phosphorylase DeoD-type.